The chain runs to 186 residues: Large ribosomal subunit protein uL10 (186 aa).

It belongs to the universal ribosomal protein uL10 family. Part of the ribosomal stalk of the 50S ribosomal subunit. The N-terminus interacts with L11 and the large rRNA to form the base of the stalk. The C-terminus forms an elongated spine to which L12 dimers bind in a sequential fashion forming a multimeric L10(L12)X complex.

Its function is as follows. Forms part of the ribosomal stalk, playing a central role in the interaction of the ribosome with GTP-bound translation factors. This chain is Large ribosomal subunit protein uL10, found in Rhodococcus jostii (strain RHA1).